We begin with the raw amino-acid sequence, 98 residues long: MLADKVKLSAKEILEKEFKTGVRGYKQEDVDKFLDMVIKDYEAFHQEIEELQQENLQLKKQLEEANKRQPAQSNTTNFDILKRLSNLEKHVFGSKLYD.

Residues 34-72 (LDMVIKDYEAFHQEIEELQQENLQLKKQLEEANKRQPAQ) adopt a coiled-coil conformation.

Belongs to the GpsB family. Forms polymers through the coiled coil domains. Interacts with PBP1, MreC and EzrA.

It localises to the cytoplasm. Functionally, divisome component that associates with the complex late in its assembly, after the Z-ring is formed, and is dependent on DivIC and PBP2B for its recruitment to the divisome. Together with EzrA, is a key component of the system that regulates PBP1 localization during cell cycle progression. Its main role could be the removal of PBP1 from the cell pole after pole maturation is completed. Also contributes to the recruitment of PBP1 to the division complex. Not essential for septum formation. The chain is Cell cycle protein GpsB from Bacillus licheniformis (strain ATCC 14580 / DSM 13 / JCM 2505 / CCUG 7422 / NBRC 12200 / NCIMB 9375 / NCTC 10341 / NRRL NRS-1264 / Gibson 46).